Reading from the N-terminus, the 290-residue chain is UPF0761 membrane protein YihY (290 aa).

The next 6 helical transmembrane spans lie at 44–64 (LLSL…FPMF), 104–124 (VGAC…DSAL), 140–160 (FAVY…SLAI), 183–203 (ILPL…VPTT), 210–230 (ALVG…GFAL), and 244–264 (VLAV…IVLL).

The protein belongs to the UPF0761 family.

The protein localises to the cell inner membrane. This Salmonella paratyphi B (strain ATCC BAA-1250 / SPB7) protein is UPF0761 membrane protein YihY.